The following is a 244-amino-acid chain: Extracellular superoxide dismutase [Cu-Zn] (244 aa).

The first 18 residues, 1-18 (MLALVCSCLLLAALPADT), serve as a signal peptide directing secretion. 2 cysteine pairs are disulfide-bonded: Cys67–Cys212 and Cys129–Cys211. An N-linked (GlcNAc...) asparagine glycan is attached at Asn111. His118, His120, and His135 together coordinate Cu cation. Zn(2+) is bound by residues His135, His143, His146, and Asp149. A Cu cation-binding site is contributed by His185. The segment at 221–244 (PWARQAQEHAERKKRRRESECKAA) is disordered. Basic and acidic residues predominate over residues 226 to 244 (AQEHAERKKRRRESECKAA).

The protein belongs to the Cu-Zn superoxide dismutase family. Homotetramer. Directly interacts with ATP7A; this interaction is copper-dependent and is required for SOD3 activity. Cu cation is required as a cofactor. Requires Zn(2+) as cofactor.

The protein resides in the secreted. It is found in the extracellular space. It localises to the golgi apparatus. Its subcellular location is the trans-Golgi network. The catalysed reaction is 2 superoxide + 2 H(+) = H2O2 + O2. Protect the extracellular space from toxic effect of reactive oxygen intermediates by converting superoxide radicals into hydrogen peroxide and oxygen. The protein is Extracellular superoxide dismutase [Cu-Zn] (SOD3) of Oryctolagus cuniculus (Rabbit).